Consider the following 171-residue polypeptide: Regulator of ribonuclease activity A (171 aa).

It belongs to the RraA family. In terms of assembly, homotrimer. Binds to both RNA-binding sites in the C-terminal region of Rne and to RhlB.

It localises to the cytoplasm. Its function is as follows. Globally modulates RNA abundance by binding to RNase E (Rne) and regulating its endonucleolytic activity. Can modulate Rne action in a substrate-dependent manner by altering the composition of the degradosome. Modulates RNA-binding and helicase activities of the degradosome. This is Regulator of ribonuclease activity A from Vibrio cholerae serotype O1 (strain ATCC 39315 / El Tor Inaba N16961).